The following is a 950-amino-acid chain: MORC family CW-type zinc finger protein 1 (950 aa).

Positions K281–Q342 form a coiled coil. The CW-type zinc finger occupies S465–S530. Residues C485, C488, C511, and C522 each coordinate Zn(2+). Disordered regions lie at residues P532–Q551 and K679–R700. A compositionally biased stretch (basic and acidic residues) spans P541–L550. The stretch at L885 to G916 forms a coiled coil.

Expressed at very low level in male germ cells.

It is found in the nucleus. In terms of biological role, required for spermatogenesis. Essential for de novo DNA methylation and silencing of transposable elements in the male embryonic germ cells. Not required for piRNA biosynthesis. This is MORC family CW-type zinc finger protein 1 from Mus musculus (Mouse).